The primary structure comprises 37 residues: Large ribosomal subunit protein bL36 (37 aa).

Belongs to the bacterial ribosomal protein bL36 family.

The polypeptide is Large ribosomal subunit protein bL36 (Bifidobacterium adolescentis (strain ATCC 15703 / DSM 20083 / NCTC 11814 / E194a)).